The following is a 1025-amino-acid chain: RNA cytidine acetyltransferase (1025 aa).

287 to 296 (GRGKSAALGL) lines the ATP pocket. N6-acetyllysine is present on Lys426. Residue Arg470 coordinates ATP. One can recognise an N-acetyltransferase domain in the interval 558 to 753 (CLLPPVPPTQ…HSCIMLKTLT (196 aa)). Residues 629–631 (IAV) and 636–642 (QGMGYGS) each bind acetyl-CoA. The required for localization to the nucleolus and midbody stretch occupies residues 702-1025 (PAERLDYLGV…KKDMKLKRKK (324 aa)). The residue at position 716 (Thr716) is a Phosphothreonine. An acetyl-CoA-binding site is contributed by Arg725. Residues Ser934, Ser984, and Ser987 each carry the phosphoserine modification. A disordered region spans residues 990–1025 (SDKKRKLEAKQEPKQSKKLKNRETKNKKDMKLKRKK). Residues 997–1018 (EAKQEPKQSKKLKNRETKNKKD) show a composition bias toward basic and acidic residues.

It belongs to the RNA cytidine acetyltransferase family. NAT10 subfamily. Part of the small subunit (SSU) processome, composed of more than 70 proteins and the RNA chaperone small nucleolar RNA (snoRNA) U3. Interacts with THUMPD1. Interacts with SUN1 (via N-terminus). Interacts with TERT. Post-translationally, acetylation at Lys-426 is required to activation of rRNA transcription. May be autoacetylated; however ability to autoacetylate in vivo requires additional evidences.

It localises to the nucleus. The protein localises to the nucleolus. It is found in the midbody. The catalysed reaction is a cytidine in 18S rRNA + acetyl-CoA + ATP + H2O = an N(4)-acetylcytidine in 18S rRNA + ADP + phosphate + CoA + H(+). The enzyme catalyses a cytidine in tRNA + acetyl-CoA + ATP + H2O = an N(4)-acetylcytidine in tRNA + ADP + phosphate + CoA + H(+). It carries out the reaction a cytidine in mRNA + acetyl-CoA + ATP + H2O = an N(4)-acetylcytidine in mRNA + ADP + phosphate + CoA + H(+). Specifically inhibited by remodelin (4-[2-(2-cyclopentylidenehydrazinyl)-4-thiazolyl]-benzonitrile, monohydrobromide), a hydrobromide salt molecule. Remodelin can improve nuclear architecture, chromatin organization and fitness of cells from patients suffering from Hutchinson-Gilford progeria syndrome (HGPS); molecular mechanisms explaining the relation between NAT10 activity and nuclear architecture are however unclear. Its function is as follows. RNA cytidine acetyltransferase that catalyzes the formation of N(4)-acetylcytidine (ac4C) modification on mRNAs, 18S rRNA and tRNAs. Catalyzes ac4C modification of a broad range of mRNAs, enhancing mRNA stability and translation. mRNA ac4C modification is frequently present within wobble cytidine sites and promotes translation efficiency. Mediates the formation of ac4C at position 1842 in 18S rRNA. May also catalyze the formation of ac4C at position 1337 in 18S rRNA. Required for early nucleolar cleavages of precursor rRNA at sites A0, A1 and A2 during 18S rRNA synthesis. Catalyzes the formation of ac4C in serine and leucine tRNAs. Requires the tRNA-binding adapter protein THUMPD1 for full tRNA acetyltransferase activity but not for 18S rRNA acetylation. In addition to RNA acetyltransferase activity, also able to acetylate lysine residues of proteins, such as histones, microtubules, p53/TP53 and MDM2, in vitro. The relevance of the protein lysine acetyltransferase activity is however unsure in vivo. Activates telomerase activity by stimulating the transcription of TERT, and may also regulate telomerase function by affecting the balance of telomerase subunit assembly, disassembly, and localization. Involved in the regulation of centrosome duplication by acetylating CENATAC during mitosis, promoting SASS6 proteasome degradation. Part of the small subunit (SSU) processome, first precursor of the small eukaryotic ribosomal subunit. During the assembly of the SSU processome in the nucleolus, many ribosome biogenesis factors, an RNA chaperone and ribosomal proteins associate with the nascent pre-rRNA and work in concert to generate RNA folding, modifications, rearrangements and cleavage as well as targeted degradation of pre-ribosomal RNA by the RNA exosome. The chain is RNA cytidine acetyltransferase from Homo sapiens (Human).